The chain runs to 509 residues: Photosystem II CP47 reaction center protein (509 aa).

Transmembrane regions (helical) follow at residues 21-36, 101-115, 140-156, 203-218, 237-252, and 457-472; these read SVHLMHTALVSGWAGS, IVLSGLLFLASIWHW, GIHLVLSSLLCFGFGAF, IAAGTVGILAGVFHLN, VLSSSIAAVFFASFVV, and NFALLFFFGHLWHGSR.

The protein belongs to the PsbB/PsbC family. PsbB subfamily. In terms of assembly, PSII is composed of 1 copy each of membrane proteins PsbA, PsbB, PsbC, PsbD, PsbE, PsbF, PsbH, PsbI, PsbJ, PsbK, PsbL, PsbM, PsbT, PsbY, PsbZ, Psb30/Ycf12, at least 3 peripheral proteins of the oxygen-evolving complex and a large number of cofactors. It forms dimeric complexes. Binds multiple chlorophylls. PSII binds additional chlorophylls, carotenoids and specific lipids. serves as cofactor.

The protein resides in the plastid. Its subcellular location is the chloroplast thylakoid membrane. One of the components of the core complex of photosystem II (PSII). It binds chlorophyll and helps catalyze the primary light-induced photochemical processes of PSII. PSII is a light-driven water:plastoquinone oxidoreductase, using light energy to abstract electrons from H(2)O, generating O(2) and a proton gradient subsequently used for ATP formation. The sequence is that of Photosystem II CP47 reaction center protein from Cyanidium caldarium (Red alga).